Reading from the N-terminus, the 509-residue chain is MDELQRNQNKHRSWQQFFLYPLFFREDLYAIAHDHHLDRSGSSEPTEFLVSRFFSFLTVKRSIRRIRKQKNSISLLGNCDRNQFIECNKNFCSKSILEGLTVVLEVSFAMRSKHFIEGMDGWNSIRSIHCIFPLMEDKLPHSNYISDIRVPYSIHPEILVRIFRRWIRDTPSLHLLRSILHEWKNSFSRENLQKAIITQGENTRFSLFLWNSYVYECESFLVPLVKRFFNSQSLLYGSFPDRTHFDKKIKHIVIFPXRQISTKKIWLLKDSFIHYVRYGERSLIALKGTHLEVKKWRYHLLHFWQYYFHLWFQPYRIRSLELSKTYSSFLGYFLHVKMKPLVVRAKMLDNLFITDLITNELNPIAPIRSILFFLAKEKFCDISGWPISKLSWTSLSDDDILDRFDRIWINLFHYYSGSMNRDGLYHIKYILLLSCAKTLACKHKSTIRVVREQLGSELFTKSFSKEREFISSSFSKNRLQRERIWNSEISQINPLANFWQKMQNKQIEN.

It belongs to the intron maturase 2 family. MatK subfamily.

The protein resides in the plastid. The protein localises to the chloroplast. Its function is as follows. Usually encoded in the trnK tRNA gene intron. Probably assists in splicing its own and other chloroplast group II introns. The sequence is that of Maturase K from Sequoia sempervirens (California redwood).